Reading from the N-terminus, the 99-residue chain is Large ribosomal subunit protein uL23 (99 aa).

It belongs to the universal ribosomal protein uL23 family. In terms of assembly, part of the 50S ribosomal subunit. Contacts protein L29, and trigger factor when it is bound to the ribosome.

Functionally, one of the early assembly proteins it binds 23S rRNA. One of the proteins that surrounds the polypeptide exit tunnel on the outside of the ribosome. Forms the main docking site for trigger factor binding to the ribosome. The chain is Large ribosomal subunit protein uL23 from Shewanella loihica (strain ATCC BAA-1088 / PV-4).